A 236-amino-acid polypeptide reads, in one-letter code: Octanoyltransferase (236 aa).

Positions 36–220 (DQVPDTVLLL…HLAAVLGASS (185 aa)) constitute a BPL/LPL catalytic domain. Residues 76-83 (RGGKITWH), 150-152 (AIG), and 163-165 (GFA) each bind substrate. The active-site Acyl-thioester intermediate is the cysteine 181.

This sequence belongs to the LipB family.

The protein resides in the cytoplasm. The enzyme catalyses octanoyl-[ACP] + L-lysyl-[protein] = N(6)-octanoyl-L-lysyl-[protein] + holo-[ACP] + H(+). Its pathway is protein modification; protein lipoylation via endogenous pathway; protein N(6)-(lipoyl)lysine from octanoyl-[acyl-carrier-protein]: step 1/2. Catalyzes the transfer of endogenously produced octanoic acid from octanoyl-acyl-carrier-protein onto the lipoyl domains of lipoate-dependent enzymes. Lipoyl-ACP can also act as a substrate although octanoyl-ACP is likely to be the physiological substrate. The polypeptide is Octanoyltransferase (Thermobifida fusca (strain YX)).